The following is a 391-amino-acid chain: MKFVDEASILVVAGDGGNGCVSFRREKYIPKGGPDGGDGGDGGDVWLEADENLNTLIDYRFEKSFRAERGQNGASRDCTGKRGKDVTIKVPVGTRVIDQGTGETMGDMTKHGQRLLVAKGGWHGLGNTRFKSSVNRTPRQKTNGTPGDKRDLLLELMLLADVGMLGMPNAGKSTFIRAVSAAKPKVADYPFTTLVPSLGVVRMDSEKSFVVADIPGLIEGAAEGAGLGIRFLKHLERCRVLLHLIDIDPIDGSDPVENARIIIGELEKYSQDLAAKPRWLVFNKIDLMDKTEAEEKAKSIAEALGWEGKYYLISAASQLGVKDLCWDVMTFIIENPIAQAEEAKQPEKVEFMWDDYHRQQLDEVAAEAEDEEWDDDWDEDDEEGVEFIYKR.

The 159-residue stretch at Met-1–Leu-159 folds into the Obg domain. A disordered region spans residues Asn-127–Gly-147. Polar residues predominate over residues Arg-129–Thr-145. The region spanning Ala-160–Ile-333 is the OBG-type G domain. GTP contacts are provided by residues Gly-166 to Ser-173, Phe-191 to Val-195, Asp-213 to Gly-216, Asn-283 to Asp-286, and Ser-314 to Ala-316. Mg(2+) is bound by residues Ser-173 and Thr-193.

It belongs to the TRAFAC class OBG-HflX-like GTPase superfamily. OBG GTPase family. Monomer. The cofactor is Mg(2+).

The protein localises to the cytoplasm. Functionally, an essential GTPase which binds GTP, GDP and possibly (p)ppGpp with moderate affinity, with high nucleotide exchange rates and a fairly low GTP hydrolysis rate. Plays a role in control of the cell cycle, stress response, ribosome biogenesis and in those bacteria that undergo differentiation, in morphogenesis control. This chain is GTPase Obg, found in Salmonella arizonae (strain ATCC BAA-731 / CDC346-86 / RSK2980).